Reading from the N-terminus, the 321-residue chain is Genome polyprotein (321 aa).

The Cytoplasmic segment spans residues 1 to 52 (RNLGKVIDTLTCGFADLMGYIPLVGAPLGGAARALAHGVRVLEDGVNYATGN). An interaction with APOA2 region spans residues 6 to 57 (VIDTLTCGFADLMGYIPLVGAPLGGAARALAHGVRVLEDGVNYATGNLPGCS). The segment at 48–51 (YATG) is important for lipid droplets localization. A helical transmembrane segment spans residues 53 to 73 (LPGCSFSLFLLALLSCLTVPA). A propeptide spans 62–75 (LLALLSCLTVPASA) (ER anchor for the core protein, removed in mature form by host signal peptidase). Residues 74–242 (SAYQVRNSTG…AGAHWGVLAG (169 aa)) are Lumenal-facing. Residues Asn-80, Asn-93, and Asn-118 are each glycosylated (N-linked (GlcNAc...) asparagine; by host). The segment at 149–180 (LVGSATLCSALYVGDLCGSIFLVGQLFTFSPR) is important for fusion. A glycan (N-linked (GlcNAc...) asparagine; by host) is linked at Asn-189. A helical transmembrane segment spans residues 243 to 263 (IAYFSMVGNWAKVLVVLLLFA). At 264-321 (GVDAETTVTGGSAAHGALGIASLFNQGARQNIQLINTNGSWHINSTALNCNDSLNTGW) the chain is on the lumenal side. The HVR1 stretch occupies residues 268-294 (ETTVTGGSAAHGALGIASLFNQGARQN). N-linked (GlcNAc...) (high mannose) asparagine; by host glycans are attached at residues Asn-301, Asn-307, and Asn-314.

The protein belongs to the hepacivirus polyprotein family. As to quaternary structure, homooligomer. Interacts with E1 (via C-terminus). Interacts with the non-structural protein 5A. Interacts (via N-terminus) with host STAT1 (via SH2 domain); this interaction results in decreased STAT1 phosphorylation and ubiquitin-mediated proteasome-dependent STAT1 degradation, leading to decreased IFN-stimulated gene transcription. Interacts with host STAT3; this interaction constitutively activates STAT3. Interacts with host LTBR receptor. Interacts with host TNFRSF1A receptor and possibly induces apoptosis. Interacts with host HNRPK. Interacts with host YWHAE. Interacts with host UBE3A/E6AP. Interacts with host DDX3X. Interacts with host APOA2. Interacts with host RXRA protein. Interacts with host SP110 isoform 3/Sp110b; this interaction sequesters the transcriptional corepressor SP110 away from the nucleus. Interacts with host CREB3 nuclear transcription protein; this interaction triggers cell transformation. Interacts with host ACY3. Interacts with host C1QR1. Interacts with host RBM24; this interaction, which enhances the interaction of the mature core protein with 5'-UTR, may inhibit viral translation and favor replication. Interacts with host EIF2AK2/PKR; this interaction induces the autophosphorylation of EIF2AK2. Part of the viral assembly initiation complex composed of NS2, E1, E2, NS3, NS4A, NS5A and the mature core protein. In terms of assembly, forms a heterodimer with envelope glycoprotein E2. Interacts with mature core protein. Interacts with protease NS2. The heterodimer E1/E2 interacts with host CLDN1; this interaction plays a role in viral entry into host cell. Interacts with host SPSB2 (via C-terminus). Part of the viral assembly initiation complex composed of NS2, E1, E2, NS3, NS4A, NS5A and the mature core protein. Forms a heterodimer with envelope glycoprotein E1. Interacts with host CD81 and SCARB1 receptors; these interactions play a role in viral entry into host cell. Interacts with host EIF2AK2/PKR; this interaction inhibits EIF2AK2 and probably allows the virus to evade the innate immune response. Interacts with host CD209/DC-SIGN and CLEC4M/DC-SIGNR. Interact with host SPCS1; this interaction is essential for viral particle assembly. Interacts with protease NS2. The heterodimer E1/E2 interacts with host CLDN1; this interaction plays a role in viral entry into host cell. Part of the viral assembly initiation complex composed of NS2, E1, E2, NS3, NS4A, NS5A and the mature core protein. Post-translationally, specific enzymatic cleavages in vivo yield mature proteins. The structural proteins, core, E1, E2 and p7 are produced by proteolytic processing by host signal peptidases. The core protein precursor is synthesized as a 23 kDa, which is retained in the ER membrane through the hydrophobic signal peptide. Cleavage by the signal peptidase releases the 21 kDa mature core protein. The cleavage of the core protein precursor occurs between aminoacids 176 and 188 but the exact cleavage site is not known. Some degraded forms of the core protein appear as well during the course of infection. The other proteins (p7, NS2, NS3, NS4A, NS4B, NS5A and NS5B) are cleaved by the viral proteases. Autoprocessing between NS2 and NS3 is mediated by the NS2 cysteine protease catalytic domain and regulated by the NS3 N-terminal domain. In terms of processing, phosphorylated by host PKC and PKA. Ubiquitinated; mediated by UBE3A and leading to core protein subsequent proteasomal degradation. Post-translationally, highly N-glycosylated.

It localises to the host endoplasmic reticulum membrane. It is found in the host mitochondrion membrane. The protein localises to the virion. The protein resides in the host cytoplasm. Its subcellular location is the host nucleus. It localises to the host lipid droplet. It is found in the virion membrane. Functionally, packages viral RNA to form a viral nucleocapsid, and promotes virion budding. Participates in the viral particle production as a result of its interaction with the non-structural protein 5A. Binds RNA and may function as a RNA chaperone to induce the RNA structural rearrangements taking place during virus replication. Modulates viral translation initiation by interacting with viral IRES and 40S ribosomal subunit. Affects various cell signaling pathways, host immunity and lipid metabolism. Prevents the establishment of cellular antiviral state by blocking the interferon-alpha/beta (IFN-alpha/beta) and IFN-gamma signaling pathways and by blocking the formation of phosphorylated STAT1 and promoting ubiquitin-mediated proteasome-dependent degradation of STAT1. Activates STAT3 leading to cellular transformation. Regulates the activity of cellular genes, including c-myc and c-fos. May repress the promoter of p53, and sequester CREB3 and SP110 isoform 3/Sp110b in the cytoplasm. Represses cell cycle negative regulating factor CDKN1A, thereby interrupting an important check point of normal cell cycle regulation. Targets transcription factors involved in the regulation of inflammatory responses and in the immune response: suppresses TNF-induced NF-kappa-B activation, and activates AP-1. Binds to dendritic cells (DCs) via C1QR1, resulting in down-regulation of T-lymphocytes proliferation. Alters lipid metabolism by interacting with hepatocellular proteins involved in lipid accumulation and storage. Induces up-regulation of FAS promoter activity, and thereby contributes to the increased triglyceride accumulation in hepatocytes (steatosis). In terms of biological role, forms a heterodimer with envelope glycoprotein E2, which mediates virus attachment to the host cell, virion internalization through clathrin-dependent endocytosis and fusion with host membrane. Fusion with the host cell is most likely mediated by both E1 and E2, through conformational rearrangements of the heterodimer required for fusion rather than a classical class II fusion mechanism. E1/E2 heterodimer binds host apolipoproteins such as APOB and ApoE thereby forming a lipo-viro-particle (LVP). APOE associated to the LVP allows the initial virus attachment to cell surface receptors such as the heparan sulfate proteoglycans (HSPGs), syndecan-1 (SDC1), syndecan-1 (SDC2), the low-density lipoprotein receptor (LDLR) and scavenger receptor class B type I (SCARB1). The cholesterol transfer activity of SCARB1 allows E2 exposure and binding of E2 to SCARB1 and the tetraspanin CD81. E1/E2 heterodimer binding on CD81 activates the epithelial growth factor receptor (EGFR) signaling pathway. Diffusion of the complex E1-E2-EGFR-SCARB1-CD81 to the cell lateral membrane allows further interaction with Claudin 1 (CLDN1) and occludin (OCLN) to finally trigger HCV entry. Forms a heterodimer with envelope glycoprotein E1, which mediates virus attachment to the host cell, virion internalization through clathrin-dependent endocytosis and fusion with host membrane. Fusion with the host cell is most likely mediated by both E1 and E2, through conformational rearrangements of the heterodimer required for fusion rather than a classical class II fusion mechanism. The interaction between envelope glycoprotein E2 and host apolipoprotein E/APOE allows the proper assembly, maturation and infectivity of the viral particles. This interaction is probably promoted via the up-regulation of cellular autophagy by the virus. E1/E2 heterodimer binds host apolipoproteins such as APOB and APOE thereby forming a lipo-viro-particle (LVP). APOE associated to the LVP allows the initial virus attachment to cell surface receptors such as the heparan sulfate proteoglycans (HSPGs), syndecan-1 (SDC1), syndecan-1 (SDC2), the low-density lipoprotein receptor (LDLR) and scavenger receptor class B type I (SCARB1). The cholesterol transfer activity of SCARB1 allows E2 exposure and binding of E2 to SCARB1 and the tetraspanin CD81. E1/E2 heterodimer binding on CD81 activates the epithelial growth factor receptor (EGFR) signaling pathway. Diffusion of the complex E1-E2-EGFR-SCARB1-CD81 to the cell lateral membrane allows further interaction with Claudin 1 (CLDN1) and occludin (OCLN) to finally trigger HCV entry. Inhibits host EIF2AK2/PKR activation, preventing the establishment of an antiviral state. Viral ligand for CD209/DC-SIGN and CLEC4M/DC-SIGNR, which are respectively found on dendritic cells (DCs), and on liver sinusoidal endothelial cells and macrophage-like cells of lymph node sinuses. These interactions allow the capture of circulating HCV particles by these cells and subsequent facilitated transmission to permissive cells such as hepatocytes and lymphocyte subpopulations. This Homo sapiens (Human) protein is Genome polyprotein.